The primary structure comprises 323 residues: Acetyl esterase (323 aa).

Residues 91-93 carry the Involved in the stabilization of the negatively charged intermediate by the formation of the oxyanion hole motif; sequence HGG. Catalysis depends on residues serine 165, aspartate 262, and histidine 292.

The protein belongs to the 'GDXG' lipolytic enzyme family. As to quaternary structure, homodimer. Interacts with MalT and MelA.

Its subcellular location is the cytoplasm. In terms of biological role, displays esterase activity towards short chain fatty esters (acyl chain length of up to 8 carbons). Able to hydrolyze triacetylglycerol (triacetin) and tributyrylglycerol (tributyrin), but not trioleylglycerol (triolein) or cholesterol oleate. Negatively regulates MalT activity by antagonizing maltotriose binding. Inhibits MelA galactosidase activity. The polypeptide is Acetyl esterase (Salmonella paratyphi A (strain ATCC 9150 / SARB42)).